The following is a 239-amino-acid chain: Phosphoribosylaminoimidazole-succinocarboxamide synthase (239 aa).

This sequence belongs to the SAICAR synthetase family.

The enzyme catalyses 5-amino-1-(5-phospho-D-ribosyl)imidazole-4-carboxylate + L-aspartate + ATP = (2S)-2-[5-amino-1-(5-phospho-beta-D-ribosyl)imidazole-4-carboxamido]succinate + ADP + phosphate + 2 H(+). It functions in the pathway purine metabolism; IMP biosynthesis via de novo pathway; 5-amino-1-(5-phospho-D-ribosyl)imidazole-4-carboxamide from 5-amino-1-(5-phospho-D-ribosyl)imidazole-4-carboxylate: step 1/2. The chain is Phosphoribosylaminoimidazole-succinocarboxamide synthase from Nitratiruptor sp. (strain SB155-2).